A 218-amino-acid chain; its full sequence is Insulin-induced gene 2 protein (218 aa).

Residues 1–21 lie on the Cytoplasmic side of the membrane; that stretch reads MGDRENVSYGSRPILAQKMNL. A helical membrane pass occupies residues 22–44; the sequence is LLRGFLLFLIGVFLALVLNLLQV. Topologically, residues 45 to 63 are lumenal; sequence QRNVTLFPPDVLSSLFSSA. Residues 64–81 form a helical membrane-spanning segment; it reads WWVPLCCGTAAAAIGLLY. Residues 82–96 are Cytoplasmic-facing; the sequence is PCIDRHLGEPHKFKR. The chain crosses the membrane as a helical span at residues 97–119; it reads EWSSVMRCVAVFVGINHASAKVD. At 120 to 122 the chain is on the lumenal side; it reads FAN. Residues 123-141 form a helical membrane-spanning segment; it reads NMQLSLTLAALSIGLWWTF. Topologically, residues 142–146 are cytoplasmic; sequence DRSRS. Residues 147–168 form a helical membrane-spanning segment; the sequence is GLGLGIGISFFATLVSQLLVYN. Over 169-182 the chain is Lumenal; sequence GVYEYTAPDFLYVR. A helical transmembrane segment spans residues 183–200; sequence SWLPCIFFAGGITMGNIG. Residues 201 to 218 are Cytoplasmic-facing; it reads RQLEMYERKALVEKSHRD. Residues 212–218 carry the KxHxx motif; it reads VEKSHRD.

Belongs to the INSIG family. In terms of assembly, interacts with scap; interaction is direct and only takes place in the presence of sterols; it prevents interaction between scap and the coat protein complex II (COPII). Associates with the SCAP-SREBP complex; association is mediated via its interaction with scap and only takes place in the presence of sterols.

The protein localises to the endoplasmic reticulum membrane. Its function is as follows. Oxysterol-binding protein that mediates feedback control of cholesterol synthesis by controlling both endoplasmic reticulum to Golgi transport of scap and degradation of hmgcr. Acts as a negative regulator of cholesterol biosynthesis by mediating the retention of the SCAP-SREBP complex in the endoplasmic reticulum, thereby blocking the processing of sterol regulatory element-binding proteins (SREBPs). Binds oxysterol, including 22-hydroxycholesterol, 24-hydroxycholesterol, 25-hydroxycholesterol and 27-hydroxycholesterol, regulating interaction with scap and retention of the SCAP-SREBP complex in the endoplasmic reticulum. In presence of oxysterol, interacts with scap, retaining the SCAP-SREBP complex in the endoplasmic reticulum, thereby preventing scap from escorting SREBPs to the Golgi. Sterol deprivation reduce oxysterol-binding, disrupting the interaction between insig2 and scap, thereby promoting Golgi transport of the SCAP-SREBP complex, followed by processing and nuclear translocation of SREBPs. Also regulates cholesterol synthesis by regulating degradation of hmgcr. In Xenopus laevis (African clawed frog), this protein is Insulin-induced gene 2 protein.